A 76-amino-acid polypeptide reads, in one-letter code: MEGKIIFICFLVVLLTLPELISSEVIRKEIPYKKRKFPYKSECRKACATAFTGGDESRIKDVKPGFFKCSCYYSSG.

The N-terminal stretch at Met1 to Ser23 is a signal peptide.

In terms of processing, contains 2 disulfide bonds. In terms of tissue distribution, expressed by the venom gland.

Its subcellular location is the secreted. Functionally, acts as a voltage-gated potassium channel inhibitor. This Scolopendra dehaani (Thai centipede) protein is Kappa-scoloptoxin(15)-Ssd3a.